Here is a 96-residue protein sequence, read N- to C-terminus: Co-chaperonin GroES (96 aa).

The protein belongs to the GroES chaperonin family. In terms of assembly, heptamer of 7 subunits arranged in a ring. Interacts with the chaperonin GroEL.

Its subcellular location is the cytoplasm. Functionally, together with the chaperonin GroEL, plays an essential role in assisting protein folding. The GroEL-GroES system forms a nano-cage that allows encapsulation of the non-native substrate proteins and provides a physical environment optimized to promote and accelerate protein folding. GroES binds to the apical surface of the GroEL ring, thereby capping the opening of the GroEL channel. In Actinobacillus succinogenes (strain ATCC 55618 / DSM 22257 / CCUG 43843 / 130Z), this protein is Co-chaperonin GroES.